The sequence spans 286 residues: Bifunctional protein FolD (286 aa).

Residues 165–167 (GRS) and Ser-190 each bind NADP(+).

Belongs to the tetrahydrofolate dehydrogenase/cyclohydrolase family. Homodimer.

The enzyme catalyses (6R)-5,10-methylene-5,6,7,8-tetrahydrofolate + NADP(+) = (6R)-5,10-methenyltetrahydrofolate + NADPH. It carries out the reaction (6R)-5,10-methenyltetrahydrofolate + H2O = (6R)-10-formyltetrahydrofolate + H(+). It functions in the pathway one-carbon metabolism; tetrahydrofolate interconversion. Catalyzes the oxidation of 5,10-methylenetetrahydrofolate to 5,10-methenyltetrahydrofolate and then the hydrolysis of 5,10-methenyltetrahydrofolate to 10-formyltetrahydrofolate. The chain is Bifunctional protein FolD from Staphylococcus aureus (strain JH9).